Here is a 182-residue protein sequence, read N- to C-terminus: Oligoribonuclease (182 aa).

The 164-residue stretch at 8-171 folds into the Exonuclease domain; the sequence is LIWIDLEMTG…DDIRESIKEL (164 aa). The active site involves Y129.

It belongs to the oligoribonuclease family.

Its subcellular location is the cytoplasm. In terms of biological role, 3'-to-5' exoribonuclease specific for small oligoribonucleotides. This Haemophilus influenzae (strain ATCC 51907 / DSM 11121 / KW20 / Rd) protein is Oligoribonuclease (orn).